The sequence spans 424 residues: N-succinylarginine dihydrolase (424 aa).

Substrate contacts are provided by residues 19-28, asparagine 110, and 137-138; these read AGLSPGNIAS and HR. The active site involves glutamate 174. Arginine 207 is a binding site for substrate. Histidine 240 is a catalytic residue. Substrate-binding residues include aspartate 242 and asparagine 349. Catalysis depends on cysteine 355, which acts as the Nucleophile.

This sequence belongs to the succinylarginine dihydrolase family. In terms of assembly, homodimer.

The enzyme catalyses N(2)-succinyl-L-arginine + 2 H2O + 2 H(+) = N(2)-succinyl-L-ornithine + 2 NH4(+) + CO2. The protein operates within amino-acid degradation; L-arginine degradation via AST pathway; L-glutamate and succinate from L-arginine: step 2/5. Its function is as follows. Catalyzes the hydrolysis of N(2)-succinylarginine into N(2)-succinylornithine, ammonia and CO(2). This is N-succinylarginine dihydrolase from Rhizorhabdus wittichii (strain DSM 6014 / CCUG 31198 / JCM 15750 / NBRC 105917 / EY 4224 / RW1) (Sphingomonas wittichii).